The following is a 404-amino-acid chain: Cysteine desulfurase IscS (404 aa).

Residues 73 to 74 (AT), Asn153, Gln181, and 201 to 203 (SAH) each bind pyridoxal 5'-phosphate. Lys204 carries the post-translational modification N6-(pyridoxal phosphate)lysine. A pyridoxal 5'-phosphate-binding site is contributed by Thr241. The active-site Cysteine persulfide intermediate is the Cys327. [2Fe-2S] cluster is bound at residue Cys327.

The protein belongs to the class-V pyridoxal-phosphate-dependent aminotransferase family. NifS/IscS subfamily. In terms of assembly, homodimer. Forms a heterotetramer with IscU, interacts with other sulfur acceptors. The cofactor is pyridoxal 5'-phosphate.

The protein localises to the cytoplasm. The enzyme catalyses (sulfur carrier)-H + L-cysteine = (sulfur carrier)-SH + L-alanine. It participates in cofactor biosynthesis; iron-sulfur cluster biosynthesis. Master enzyme that delivers sulfur to a number of partners involved in Fe-S cluster assembly, tRNA modification or cofactor biosynthesis. Catalyzes the removal of elemental sulfur atoms from cysteine to produce alanine. Functions as a sulfur delivery protein for Fe-S cluster synthesis onto IscU, an Fe-S scaffold assembly protein, as well as other S acceptor proteins. The chain is Cysteine desulfurase IscS from Anaeromyxobacter dehalogenans (strain 2CP-C).